We begin with the raw amino-acid sequence, 565 residues long: Probable alpha-L-arabinofuranosidase A (565 aa).

The first 19 residues, 1-19 (MPLSAAIKSSLSVSVRADA), serve as a signal peptide directing secretion. N-linked (GlcNAc...) asparagine glycosylation is found at N71, N91, N128, N303, N362, N486, and N501.

This sequence belongs to the glycosyl hydrolase 51 family.

It is found in the secreted. It catalyses the reaction Hydrolysis of terminal non-reducing alpha-L-arabinofuranoside residues in alpha-L-arabinosides.. Its pathway is glycan metabolism; L-arabinan degradation. Functionally, alpha-L-arabinofuranosidase involved in the degradation of arabinoxylan, a major component of plant hemicellulose. Acts only on small linear 1,5-alpha-linked L-arabinofuranosyl oligosaccharides. The chain is Probable alpha-L-arabinofuranosidase A (abfA) from Emericella nidulans (strain FGSC A4 / ATCC 38163 / CBS 112.46 / NRRL 194 / M139) (Aspergillus nidulans).